Consider the following 256-residue polypeptide: Imidazole glycerol phosphate synthase subunit HisF (256 aa).

Active-site residues include D11 and D130.

The protein belongs to the HisA/HisF family. Heterodimer of HisH and HisF.

It localises to the cytoplasm. It catalyses the reaction 5-[(5-phospho-1-deoxy-D-ribulos-1-ylimino)methylamino]-1-(5-phospho-beta-D-ribosyl)imidazole-4-carboxamide + L-glutamine = D-erythro-1-(imidazol-4-yl)glycerol 3-phosphate + 5-amino-1-(5-phospho-beta-D-ribosyl)imidazole-4-carboxamide + L-glutamate + H(+). Its pathway is amino-acid biosynthesis; L-histidine biosynthesis; L-histidine from 5-phospho-alpha-D-ribose 1-diphosphate: step 5/9. IGPS catalyzes the conversion of PRFAR and glutamine to IGP, AICAR and glutamate. The HisF subunit catalyzes the cyclization activity that produces IGP and AICAR from PRFAR using the ammonia provided by the HisH subunit. The chain is Imidazole glycerol phosphate synthase subunit HisF from Prochlorococcus marinus (strain NATL2A).